Consider the following 163-residue polypeptide: Zinc finger A20 and AN1 domain-containing stress-associated protein 3 (163 aa).

The segment at 7–41 (LQEPRLCANNCGFFGSTATQNLCSKCFRDLQHQEQ) adopts an A20-type zinc-finger fold. Residues cysteine 13, cysteine 17, cysteine 29, and cysteine 32 each contribute to the Zn(2+) site. Positions 57–101 (VGAAASSSVSPPPPPPADSKEIVEAKSEKRAAAEPEEADGPPQDP) are disordered. A compositionally biased stretch (basic and acidic residues) spans 74–89 (DSKEIVEAKSEKRAAA). The segment at 98-144 (PQDPKRCLTCRRRVGITGFRCRCGFVFCGTHRYAEQHECSFDFKRMG) adopts an AN1-type zinc-finger fold. Zn(2+) is bound by residues cysteine 104, cysteine 107, cysteine 118, cysteine 120, cysteine 125, histidine 128, histidine 134, and cysteine 136.

Its function is as follows. May be involved in environmental stress response. The protein is Zinc finger A20 and AN1 domain-containing stress-associated protein 3 (SAP3) of Arabidopsis thaliana (Mouse-ear cress).